Here is a 156-residue protein sequence, read N- to C-terminus: Small ribosomal subunit protein uS7c (156 aa).

Belongs to the universal ribosomal protein uS7 family. In terms of assembly, part of the 30S ribosomal subunit.

Its subcellular location is the plastid. The protein localises to the chloroplast. In terms of biological role, one of the primary rRNA binding proteins, it binds directly to 16S rRNA where it nucleates assembly of the head domain of the 30S subunit. In Mesostigma viride (Green alga), this protein is Small ribosomal subunit protein uS7c (rps7).